Consider the following 540-residue polypeptide: FAD-binding monooxygenase lolF1 (540 aa).

Residues 43–46 (VWRE) and 55–58 (DSLF) contribute to the FAD site. Residues 53–55 (AVD), 182–188 (TGPSGVQ), and 205–206 (QS) contribute to the NADP(+) site.

This sequence belongs to the FAD-binding monooxygenase family. FAD serves as cofactor.

The protein operates within alkaloid biosynthesis. Its function is as follows. FAD-binding monooxygenase; part of the gene cluster that mediates the biosynthesis of loline alkaloids, potent insecticidal agents composed of a pyrrolizidine ring system and an uncommon ether bridge linking carbons 2 and 7. Lolines are structurally differentiated by the various modifications of the L-amino group and include norloline, loline, N-methylloline, N-acetylloline, N-acetylnorloline, and N-formylloline. The first committed step is the condensation of O-acetyl-L-homoserine (derived from L-aspartic acid) and L-proline, probably catalyzed by the gamma-type pyridoxal 5'-phosphate(PLP)-dependent enzyme lolC, to give the diamino diacid, NACPP. Ensuing cyclization, decarboxylation, and acetylation steps yield 1-exo-acetamidopyrrolizidine (AcAP). LolO is required for installation of the ether bridge upon the pathway intermediate, 1-exo-acetamidopyrrolizidine (AcAP). In sequential 2-oxoglutarate- and O(2)-consuming steps, lolO removes hydrogens from C2 and C7 of AcAP to form both carbon-oxygen bonds in N-acetylnorloline (NANL), the precursor to all other lolines. The enzymes lolD, lolE, lolF and lolT have also been proposed to be involved in the ether-bridge installation. Further processing of the exocyclic moiety of NANL by fungal N-acetamidase (LolN), methyltransferase (LolM), and cytochrome P450 (LolP) enzymes, with occasional involvement of a plant acetyltransferase, generates the other known lolines. LolN transforms NANL to norlonine which is monomethylated and dimethylated to respectively lonine and N-methyllonine (NML) by lolM. LolP catalyzes hydroxylation of the methyl group in N-methylloline (NML) and further oxygenation to N-formylloline (NFL). A plant acetyltransferase is responsible for the acetylation of loline to form N-acetylloline (NAL). LolA might interact with aspartate kinase to prevent feedback inhibition of its activity by these end products and thereby promote production of L-homoserine from L-aspartate. The polypeptide is FAD-binding monooxygenase lolF1 (Epichloe uncinata (Endophyte fungus)).